A 66-amino-acid polypeptide reads, in one-letter code: Hirudin-PA (66 aa).

The interaction with thrombin active site stretch occupies residues 1–3 (ITY). 3 disulfide bridges follow: C6–C14, C16–C28, and C22–C39. Residues 39–66 (CVTGEGTPKPQSHNQGDFEPIPEDAYDE) are disordered. Residue T45 is glycosylated (O-linked (GalNAc...) threonine). Positions 55–66 (DFEPIPEDAYDE) are interaction with fibrinogen-binding exosite of thrombin. Y64 is subject to Sulfotyrosine.

It belongs to the protease inhibitor I14 (hirudin) family.

It is found in the secreted. Hirudin is a potent thrombin-specific protease inhibitor. It forms a stable non-covalent complex with alpha-thrombin, thereby abolishing its ability to cleave fibrinogen. The chain is Hirudin-PA from Hirudo medicinalis (Medicinal leech).